The sequence spans 1306 residues: Activating transcription factor 7-interacting protein 1 (1306 aa).

N-acetylmethionine is present on Met-1. The tract at residues 1–23 (MDSVEEPQKKVFKARKTMRASDR) is disordered. Residue Lys-33 forms a Glycyl lysine isopeptide (Lys-Gly) (interchain with G-Cter in SUMO2) linkage. Phosphoserine occurs at positions 57 and 112. 7 disordered regions span residues 104–470 (EDLN…SMET), 496–604 (LPVE…SKRR), 689–722 (AAKD…NNMT), 765–785 (VVSS…PAAP), 871–895 (PLPN…NSST), 920–1060 (RTSL…GPSQ), and 1152–1196 (AGPQ…STSL). 2 stretches are compositionally biased toward polar residues: residues 109–134 (EALS…SPAS) and 143–162 (VSDN…SDNP). At Thr-124 the chain carries Phosphothreonine. 3 stretches are compositionally biased toward low complexity: residues 185 to 212 (EEPP…CSEP), 246 to 261 (EAAS…ASDE), and 284 to 303 (PSGD…LPRS). Basic and acidic residues predominate over residues 432–441 (QSEKDEHKSP). Phosphoserine occurs at positions 511, 514, 516, and 533. Residues 513 to 523 (GSPSKQESSEN) show a composition bias toward polar residues. Composition is skewed to basic and acidic residues over residues 557–566 (EGEKSEKDGK), 592–601 (KSEDMDSVES), and 689–699 (AAKDDLKKRQE). Residues 587 to 605 (RRKRSKSEDMDSVESKRRR) carry the Nuclear localization signal motif. Residue Lys-592 forms a Glycyl lysine isopeptide (Lys-Gly) (interchain with G-Cter in SUMO2) linkage. Ser-593 bears the Phosphoserine mark. Residues 596–851 (MDSVESKRRR…NQPSGNVEFI (256 aa)) are interaction with SETDB1. Positions 666–696 (NKRHKAVLTELQAKIARLTKRFGAAKDDLKK) form a coiled coil. A phosphoserine mark is found at Ser-700 and Ser-707. Residues 713-722 (NDTNSNNNMT) show a composition bias toward polar residues. Over residues 871 to 884 (PLPNPTKPNIPSVP) the composition is skewed to pro residues. Residue Ser-933 is modified to Phosphoserine. Residues Lys-944 and Lys-974 each participate in a glycyl lysine isopeptide (Lys-Gly) (interchain with G-Cter in SUMO2) cross-link. The segment covering 948–981 (STFSPPSSAEQNSSATPRIVTENQTNKTVDSSIN) has biased composition (polar residues). Residues 987–1000 (STSQSGKASSSDSS) are compositionally biased toward low complexity. The tract at residues 1001-1011 (GVIDLTMDDEE) is interaction with SUMO. The segment covering 1022-1040 (SPPSSSTVSTSQPMSRPLQ) has biased composition (low complexity). The Fibronectin type-III 1 domain maps to 1054 to 1143 (PTSGPSQATI…RVPQTTTYVV (90 aa)). Pro residues predominate over residues 1170–1187 (PRPLHPAPLPEAPQPQRL). An interaction with MBD1 region spans residues 1190–1306 (EAASTSLPQK…TDVISSSQNS (117 aa)). A Fibronectin type-III 2 domain is found at 1196-1302 (LPQKPHLKLA…DPQSTDVISS (107 aa)).

It belongs to the MCAF family. Interacts with MBD1; the interaction is enhanced when MBD1 is sumoylated. Interacts with SETDB1; the interaction protects SETDB1 from proteasomal degradation and is required to stimulate histone methyltransferase activity and facilitate the conversion of dimethylated to trimethylated H3 'Lys-9'. Interacts with SUMO ubiquitin-like proteins (SUMO1, SUNO2 and SUMO3), with a preference for SUMO2 and SUMO3. Interacts with SP1, ATF7 and ZHX1. Interacts with the general transcription machinery, including ERCC2, ERCC3, GTF2E1, GTF2E2 and POLR2A. Ubiquitously expressed at all stages studied.

Its subcellular location is the nucleus. Recruiter that couples transcriptional factors to general transcription apparatus and thereby modulates transcription regulation and chromatin formation. Can both act as an activator or a repressor depending on the context. Required for HUSH-mediated heterochromatin formation and gene silencing. Mediates MBD1-dependent transcriptional repression, probably by recruiting complexes containing SETDB1. Stabilizes SETDB1, is required to stimulate histone methyltransferase activity of SETDB1 and facilitates the conversion of dimethylated to trimethylated H3 'Lys-9' (H3K9me3). The complex formed with MBD1 and SETDB1 represses transcription and couples DNA methylation and histone H3 'Lys-9' trimethylation (H3K9me3). Facilitates telomerase TERT and TERC gene expression by SP1 in cancer cells. The protein is Activating transcription factor 7-interacting protein 1 (Atf7ip) of Mus musculus (Mouse).